A 373-amino-acid chain; its full sequence is Alanine dehydrogenase (373 aa).

The substrate site is built by Arg-15 and Lys-74. His-95 functions as the Proton donor/acceptor in the catalytic mechanism. NAD(+)-binding positions include Ser-133, 177-178 (QA), Asp-197, Ser-219, 238-239 (VL), 266-269 (IAID), and 298-301 (VANM). Asp-269 acts as the Proton donor/acceptor in catalysis.

It belongs to the AlaDH/PNT family. As to quaternary structure, homohexamer. Trimer of dimer.

The enzyme catalyses L-alanine + NAD(+) + H2O = pyruvate + NH4(+) + NADH + H(+). The protein operates within amino-acid degradation; L-alanine degradation via dehydrogenase pathway; NH(3) and pyruvate from L-alanine: step 1/1. Functionally, catalyzes the reversible reductive amination of pyruvate to L-alanine. May play a role in cell wall synthesis as L-alanine is an important constituent of the peptidoglycan layer. The protein is Alanine dehydrogenase (ald) of Staphylococcus haemolyticus (strain JCSC1435).